Reading from the N-terminus, the 335-residue chain is 2-keto-3-deoxygluconate permease (335 aa).

10 consecutive transmembrane segments (helical) span residues isoleucine 10 to proline 30, glycine 42 to isoleucine 62, leucine 77 to proline 97, glycine 100 to methionine 120, alanine 141 to alanine 161, leucine 163 to alanine 183, glutamine 200 to leucine 220, leucine 224 to alanine 244, threonine 254 to alanine 274, and alanine 289 to tyrosine 309.

It belongs to the KdgT transporter family.

The protein resides in the cell inner membrane. The enzyme catalyses 2-dehydro-3-deoxy-D-gluconate(in) + H(+)(in) = 2-dehydro-3-deoxy-D-gluconate(out) + H(+)(out). Its function is as follows. Catalyzes the proton-dependent uptake of 2-keto-3-deoxygluconate (KDG) into the cell. The protein is 2-keto-3-deoxygluconate permease of Tolumonas auensis (strain DSM 9187 / NBRC 110442 / TA 4).